Here is a 346-residue protein sequence, read N- to C-terminus: Dehydrogenase azaJ (346 aa).

43-48 (VDYATQ) contributes to the NADP(+) binding site. 133 to 140 (LAFSTAIV) is a binding site for substrate. NADP(+) contacts are provided by residues 170–173 (ATSV), 193–196 (SPHN), Tyr-211, and 251–252 (LN). 269 to 273 (APPNV) contributes to the substrate binding site. 336 to 337 (VS) serves as a coordination point for NADP(+).

This sequence belongs to the zinc-containing alcohol dehydrogenase family.

It participates in secondary metabolite biosynthesis. In terms of biological role, dehydrogenase; part of the gene cluster that mediates the biosynthesis of azaphilones, a class of fungal metabolites characterized by a highly oxygenated pyrano-quinone bicyclic core and exhibiting a broad range of bioactivities. In the first step, the non-reducing polyketide synthase azaA forms the hexaketide precursor from successive condensations of five malonyl-CoA units, presumably with a simple acetyl-CoA starter unit. The reactive polyketide chain then undergoes a PT-mediated C2-C7 cyclization to afford the aromatic ring and is eventually released as an aldehyde through the R-domain. The putative ketoreductase azaE is proposed to catalyze the reduction of the terminal ketone resulting in the early culture product FK17-P2a. The monooxygenase azaH was demonstrated to be the only enzyme required to convert FK17-P2a to azanigerone E. AzaH first hydroxylates the benzaldehyde intermediate FK17-P2a at C4, which triggers the formation of the pyran-ring to afford azanigerone E. In parallel, the 2,4-dimethylhexanoyl chain is synthesized by the HR-PKS azaB and is proposed to be transferred to the C4-hydroxyl of azanigerone E by the acyltransferase azaD directly from the ACP domain of azaB. Alternatively, the 2,4-dimethyl-hexanoyl chain may be offloaded from the HR-PKS as a carboxylic acid and converted to an acyl-CoA by azaF. The resulting acyl-CoA molecule could then be taken up as a substrate by AzaD to form azanigerone B. To yield the carboxylic acid substituent in azanigerone A, the hydroxypropyl side chain of azanigerone B would need to undergo a C-C oxidative cleavage catalyzed by cytochrome P450 AzaI. AzaI is proposed to act on a vicinal diol that leads to a C-C bond scission either through an alkoxyradical intermediate or a peroxy complex. In the biosynthesis of azanigerone A, azanigerone B first undergoes hydroxylation at C10, possibly catalyzed by one of the two FAD-dependent monooxygenases encoded in the cluster, azaG or azaL, resulting in the vicinal diol azanigerone C. Oxidative cleavage of azanigerone C by azaI would yield the corresponding aldehyde derivative of azanigerone A. Finally, the dehydrogenase azaJ is proposed to convert the aldehyde functional group into the carboxylic acid, completing the conversion from azanigerone B to azanigerone A. Alternatively, the oxidation of aldehyde to carboxylic acid may be catalyzed by the same P450 enzyme azaI via consecutive oxidation or by endogenous alcohol dehydrogenase. The protein is Dehydrogenase azaJ of Aspergillus niger (strain ATCC 1015 / CBS 113.46 / FGSC A1144 / LSHB Ac4 / NCTC 3858a / NRRL 328 / USDA 3528.7).